The following is a 128-amino-acid chain: Cytochrome c-type biogenesis protein CcmE (128 aa).

At 1-8 the chain is on the cytoplasmic side; sequence MQKRVRNR. Residues 9-29 traverse the membrane as a helical; Signal-anchor for type II membrane protein segment; that stretch reads LITIIICFCSACLGISIILYN. Residues 30–128 lie on the Periplasmic side of the membrane; it reads LEKNIVFFLP…KHDENYRPPQ (99 aa). Heme contacts are provided by His120 and Tyr124.

Belongs to the CcmE/CycJ family.

The protein resides in the cell inner membrane. Heme chaperone required for the biogenesis of c-type cytochromes. Transiently binds heme delivered by CcmC and transfers the heme to apo-cytochromes in a process facilitated by CcmF and CcmH. This chain is Cytochrome c-type biogenesis protein CcmE, found in Rickettsia peacockii (strain Rustic).